The primary structure comprises 173 residues: MSIILGIDPGSRVTGYGVIRQVGRQLTYLGSGCIRTKVDDLPSRLKLIYAGVTEIITQFQPDYFAIEQVFMAKNADSALKLGQARGVAIVAAVNQDLPVFEYAARQVKQTVVGIGSAEKSQVQHMVRTLLKLPANPQADAADALAIAITHCHVSQNAMQMSDSRLNLARGRLR.

Active-site residues include D8, E67, and D139. 3 residues coordinate Mg(2+): D8, E67, and D139.

It belongs to the RuvC family. In terms of assembly, homodimer which binds Holliday junction (HJ) DNA. The HJ becomes 2-fold symmetrical on binding to RuvC with unstacked arms; it has a different conformation from HJ DNA in complex with RuvA. In the full resolvosome a probable DNA-RuvA(4)-RuvB(12)-RuvC(2) complex forms which resolves the HJ. Mg(2+) serves as cofactor.

The protein resides in the cytoplasm. It catalyses the reaction Endonucleolytic cleavage at a junction such as a reciprocal single-stranded crossover between two homologous DNA duplexes (Holliday junction).. Its function is as follows. The RuvA-RuvB-RuvC complex processes Holliday junction (HJ) DNA during genetic recombination and DNA repair. Endonuclease that resolves HJ intermediates. Cleaves cruciform DNA by making single-stranded nicks across the HJ at symmetrical positions within the homologous arms, yielding a 5'-phosphate and a 3'-hydroxyl group; requires a central core of homology in the junction. The consensus cleavage sequence is 5'-(A/T)TT(C/G)-3'. Cleavage occurs on the 3'-side of the TT dinucleotide at the point of strand exchange. HJ branch migration catalyzed by RuvA-RuvB allows RuvC to scan DNA until it finds its consensus sequence, where it cleaves and resolves the cruciform DNA. The polypeptide is Crossover junction endodeoxyribonuclease RuvC (Citrobacter koseri (strain ATCC BAA-895 / CDC 4225-83 / SGSC4696)).